Consider the following 336-residue polypeptide: Holliday junction branch migration complex subunit RuvB (336 aa).

Residues 1 to 182 (MKERIVNLET…FGMSFRMQFY (182 aa)) are large ATPase domain (RuvB-L). ATP is bound by residues L21, R22, G63, K66, T67, S68, 129 to 131 (EDF), R172, Y182, and R219. T67 provides a ligand contact to Mg(2+). Residues 183–253 (SPSELALIIK…ITLHALNELG (71 aa)) form a small ATPAse domain (RuvB-S) region. The head domain (RuvB-H) stretch occupies residues 256–336 (ELGFDEADLA…IPTLKSQSLF (81 aa)). DNA-binding residues include R310 and R315.

This sequence belongs to the RuvB family. As to quaternary structure, homohexamer. Forms an RuvA(8)-RuvB(12)-Holliday junction (HJ) complex. HJ DNA is sandwiched between 2 RuvA tetramers; dsDNA enters through RuvA and exits via RuvB. An RuvB hexamer assembles on each DNA strand where it exits the tetramer. Each RuvB hexamer is contacted by two RuvA subunits (via domain III) on 2 adjacent RuvB subunits; this complex drives branch migration. In the full resolvosome a probable DNA-RuvA(4)-RuvB(12)-RuvC(2) complex forms which resolves the HJ.

It localises to the cytoplasm. It carries out the reaction ATP + H2O = ADP + phosphate + H(+). In terms of biological role, the RuvA-RuvB-RuvC complex processes Holliday junction (HJ) DNA during genetic recombination and DNA repair, while the RuvA-RuvB complex plays an important role in the rescue of blocked DNA replication forks via replication fork reversal (RFR). RuvA specifically binds to HJ cruciform DNA, conferring on it an open structure. The RuvB hexamer acts as an ATP-dependent pump, pulling dsDNA into and through the RuvAB complex. RuvB forms 2 homohexamers on either side of HJ DNA bound by 1 or 2 RuvA tetramers; 4 subunits per hexamer contact DNA at a time. Coordinated motions by a converter formed by DNA-disengaged RuvB subunits stimulates ATP hydrolysis and nucleotide exchange. Immobilization of the converter enables RuvB to convert the ATP-contained energy into a lever motion, pulling 2 nucleotides of DNA out of the RuvA tetramer per ATP hydrolyzed, thus driving DNA branch migration. The RuvB motors rotate together with the DNA substrate, which together with the progressing nucleotide cycle form the mechanistic basis for DNA recombination by continuous HJ branch migration. Branch migration allows RuvC to scan DNA until it finds its consensus sequence, where it cleaves and resolves cruciform DNA. This chain is Holliday junction branch migration complex subunit RuvB, found in Helicobacter acinonychis (strain Sheeba).